Reading from the N-terminus, the 167-residue chain is uncharacterized protein (167 aa).

Transmembrane regions (helical) follow at residues 13 to 33 (LIYL…TWLI), 37 to 57 (VLAV…FLPY), 61 to 81 (WFAL…KIGE), and 103 to 123 (LLLI…LVPS).

The protein localises to the cell membrane. This is an uncharacterized protein from Haemophilus influenzae (strain ATCC 51907 / DSM 11121 / KW20 / Rd).